We begin with the raw amino-acid sequence, 82 residues long: Exodeoxyribonuclease 7 small subunit (82 aa).

Belongs to the XseB family. As to quaternary structure, heterooligomer composed of large and small subunits.

Its subcellular location is the cytoplasm. The enzyme catalyses Exonucleolytic cleavage in either 5'- to 3'- or 3'- to 5'-direction to yield nucleoside 5'-phosphates.. Its function is as follows. Bidirectionally degrades single-stranded DNA into large acid-insoluble oligonucleotides, which are then degraded further into small acid-soluble oligonucleotides. This Mannheimia succiniciproducens (strain KCTC 0769BP / MBEL55E) protein is Exodeoxyribonuclease 7 small subunit.